The sequence spans 70 residues: Large ribosomal subunit protein bL31 (70 aa).

Zn(2+) contacts are provided by Cys-16, Cys-18, Cys-37, and Cys-40.

The protein belongs to the bacterial ribosomal protein bL31 family. Type A subfamily. In terms of assembly, part of the 50S ribosomal subunit. The cofactor is Zn(2+).

Its function is as follows. Binds the 23S rRNA. This is Large ribosomal subunit protein bL31 from Salmonella agona (strain SL483).